Here is a 147-residue protein sequence, read N- to C-terminus: Large ribosomal subunit protein uL11 (147 aa).

This sequence belongs to the universal ribosomal protein uL11 family. As to quaternary structure, part of the ribosomal stalk of the 50S ribosomal subunit. Interacts with L10 and the large rRNA to form the base of the stalk. L10 forms an elongated spine to which L12 dimers bind in a sequential fashion forming a multimeric L10(L12)X complex. Post-translationally, one or more lysine residues are methylated.

Functionally, forms part of the ribosomal stalk which helps the ribosome interact with GTP-bound translation factors. The sequence is that of Large ribosomal subunit protein uL11 from Sorangium cellulosum (strain So ce56) (Polyangium cellulosum (strain So ce56)).